Consider the following 760-residue polypeptide: Pentatricopeptide repeat-containing protein At1g20230 (760 aa).

PPR repeat units lie at residues 49–79 (DGYI…IPDP), 80–114 (TIYS…GLIP), 115–149 (DSHV…GLDM), 150–180 (DAFV…MSDK), 181–215 (DVVT…GIEA), 216–250 (NIVS…GFCP), 251–285 (DQVT…GLLK), 286–316 (DKCV…FEMM), 317–351 (EAGV…TMEL), 352–386 (NVVS…GVKP), 387–421 (NHVT…HLLD), 422–452 (NVHV…MPTK), 453–487 (NLVC…RLKP), 488–523 (DFIS…GIKP), and 524–554 (RLEH…MPFE). The interval 559–634 (VWGALLNSCR…NPGCSWIQVK (76 aa)) is type E motif. A type E(+) motif region spans residues 635 to 665 (NRVYTLLAGDKSHPQIDQITEKMDEISKEMR). A type DYW motif region spans residues 666–760 (KSGHRPNLDF…DGICSCGDFW (95 aa)).

Belongs to the PPR family. PCMP-H subfamily.

The chain is Pentatricopeptide repeat-containing protein At1g20230 (PCMP-H21) from Arabidopsis thaliana (Mouse-ear cress).